The chain runs to 214 residues: MTIGIVGRKSGMTRIFTDDGLSVPVTVVEVDPNRITQVKSVETDGYAAVQVTVGSRRASRVSKPEAGHFAKAEVEAGRTVLELRNESGEQFEVGGLLTVEAFEAGQKVDVTGASKGKGFAGVIKRYNFRMQDATHGNSLSHRAPGSIGQCQTPGRVFKGKKMAGHMGAARVTTQNLEVVRVDVERNLLLIKGAVPGAPGGDVIIRPAVKSRNNG.

Gln-151 is modified (N5-methylglutamine).

This sequence belongs to the universal ribosomal protein uL3 family. As to quaternary structure, part of the 50S ribosomal subunit. Forms a cluster with proteins L14 and L19. Methylated by PrmB.

In terms of biological role, one of the primary rRNA binding proteins, it binds directly near the 3'-end of the 23S rRNA, where it nucleates assembly of the 50S subunit. In Saccharophagus degradans (strain 2-40 / ATCC 43961 / DSM 17024), this protein is Large ribosomal subunit protein uL3.